The sequence spans 611 residues: Aspartate--tRNA(Asp/Asn) ligase (611 aa).

Glu177 provides a ligand contact to L-aspartate. Positions 201–204 are aspartate; the sequence is QLFK. Arg223 contributes to the L-aspartate binding site. ATP contacts are provided by residues 223 to 225 and Gln232; that span reads RDE. His461 provides a ligand contact to L-aspartate. Position 499 (Glu499) interacts with ATP. An L-aspartate-binding site is contributed by Arg506. Residue 551–554 coordinates ATP; that stretch reads GVDR.

This sequence belongs to the class-II aminoacyl-tRNA synthetase family. Type 1 subfamily. As to quaternary structure, homodimer.

The protein localises to the cytoplasm. The catalysed reaction is tRNA(Asx) + L-aspartate + ATP = L-aspartyl-tRNA(Asx) + AMP + diphosphate. Functionally, aspartyl-tRNA synthetase with relaxed tRNA specificity since it is able to aspartylate not only its cognate tRNA(Asp) but also tRNA(Asn). Reaction proceeds in two steps: L-aspartate is first activated by ATP to form Asp-AMP and then transferred to the acceptor end of tRNA(Asp/Asn). The sequence is that of Aspartate--tRNA(Asp/Asn) ligase from Synechococcus sp. (strain WH7803).